Here is a 510-residue protein sequence, read N- to C-terminus: Laccase (510 aa).

Plastocyanin-like domains are found at residues 45–79, 99–174, 242–317, and 372–506; these read PTKLWTYNGSLPGPTIKANRNEKVKVKWMNKLPLK, KTVV…LISD, YLEV…IVLK, and LTLT…MRPM. The Cu cation site is built by histidine 103, histidine 105, histidine 151, and histidine 153. Residues histidine 419, histidine 422, histidine 424, histidine 491, cysteine 492, histidine 493, histidine 497, and methionine 502 each coordinate Cu cation.

The protein belongs to the multicopper oxidase family. The cofactor is Cu(2+).

It catalyses the reaction 4 hydroquinone + O2 = 4 benzosemiquinone + 2 H2O. Resistant to alkali and organic solvents such as methanol, ethanol and acetone. Resistant to EDTA, which might be explained by the spatial protection of copper ions in the active sites. Inhibited by DMSO. Strongly inhibited by Fe(2+) and DTT. In terms of biological role, multicopper oxidase that catalyzes the oxidation of a variety of substrates, including phenolic and non-phenolic compounds. Substrates include 2,6-dimethoxyphenol (2,6-DMP) and the non-phenolic compound 2,2'-azino-bis(3-ethylbenzothiazoline-6-sulfonic acid) (ABTS). Cannot use guaiacol and catechol. The protein is Laccase of Bacillus stratosphericus.